The chain runs to 163 residues: Shikimate kinase (163 aa).

10-15 (GVGKTT) provides a ligand contact to ATP. Threonine 14 contributes to the Mg(2+) binding site. Aspartate 28, arginine 52, and glycine 75 together coordinate substrate. Residue arginine 116 coordinates ATP. Position 134 (arginine 134) interacts with substrate.

The protein belongs to the shikimate kinase family. Monomer. Mg(2+) is required as a cofactor.

Its subcellular location is the cytoplasm. The catalysed reaction is shikimate + ATP = 3-phosphoshikimate + ADP + H(+). It participates in metabolic intermediate biosynthesis; chorismate biosynthesis; chorismate from D-erythrose 4-phosphate and phosphoenolpyruvate: step 5/7. Catalyzes the specific phosphorylation of the 3-hydroxyl group of shikimic acid using ATP as a cosubstrate. The chain is Shikimate kinase from Streptococcus suis (strain 98HAH33).